Reading from the N-terminus, the 497-residue chain is Chlorophyllide reductase 52.5 kDa chain (497 aa).

Transmembrane regions (helical) follow at residues 65–82 (VATVLCGSACCVYGLSFI), 126–142 (AIVVINLCVPTASGVPL), and 216–233 (MVIGAMLAPMGLAVGPTV).

This sequence belongs to the BchN/ChlN family. As to quaternary structure, chlorophyllide reductase is composed of three subunits; BchX, BchY and BchZ. Forms a heterodimer of one BchY and one BchZ subunit.

It is found in the cell membrane. It catalyses the reaction 3-deacetyl-3-vinylbacteriochlorophyllide a + 2 oxidized [2Fe-2S]-[ferredoxin] + ADP + phosphate = chlorophyllide a + 2 reduced [2Fe-2S]-[ferredoxin] + ATP + H2O + H(+). The enzyme catalyses bacteriochlorophyllide a + 2 oxidized [2Fe-2S]-[ferredoxin] + ADP + phosphate = 3-acetyl-3-devinylchlorophyllide a + 2 reduced [2Fe-2S]-[ferredoxin] + ATP + H2O + H(+). It carries out the reaction 3-deacetyl-3-(1-hydroxyethyl)bacteriochlorophyllide a + 2 oxidized [2Fe-2S]-[ferredoxin] + ADP + phosphate = 3-devinyl-3-(1-hydroxyethyl)chlorophyllide a + 2 reduced [2Fe-2S]-[ferredoxin] + ATP + H2O + H(+). The protein operates within porphyrin-containing compound metabolism; bacteriochlorophyll biosynthesis (light-independent). In terms of biological role, converts chlorophylls (Chl) into bacteriochlorophylls (BChl) by reducing ring B of the tetrapyrrole. The polypeptide is Chlorophyllide reductase 52.5 kDa chain (bchY) (Rhodobacter capsulatus (strain ATCC BAA-309 / NBRC 16581 / SB1003)).